The chain runs to 284 residues: Diaminopimelate epimerase (284 aa).

Positions 20, 53, and 73 each coordinate substrate. Residue C82 is the Proton donor of the active site. Substrate is bound by residues 83-84 (GN), N167, N200, and 218-219 (ER). Residue C227 is the Proton acceptor of the active site. 228–229 (GS) provides a ligand contact to substrate.

The protein belongs to the diaminopimelate epimerase family. Homodimer.

It is found in the cytoplasm. The catalysed reaction is (2S,6S)-2,6-diaminopimelate = meso-2,6-diaminopimelate. It functions in the pathway amino-acid biosynthesis; L-lysine biosynthesis via DAP pathway; DL-2,6-diaminopimelate from LL-2,6-diaminopimelate: step 1/1. Its function is as follows. Catalyzes the stereoinversion of LL-2,6-diaminopimelate (L,L-DAP) to meso-diaminopimelate (meso-DAP), a precursor of L-lysine and an essential component of the bacterial peptidoglycan. In Xylella fastidiosa (strain 9a5c), this protein is Diaminopimelate epimerase.